The chain runs to 920 residues: Probable helicase HelY (920 aa).

The 159-residue stretch at 26–184 folds into the Helicase ATP-binding domain; it reads CAALERGHGV…WVQTVRGDTT (159 aa). 39 to 46 provides a ligand contact to ATP; it reads APTGAGKT. Positions 132-135 match the DEVH box motif; it reads DEVH. In terms of domain architecture, Helicase C-terminal spans 265 to 469; the sequence is EVIAILDAEG…SYNMTINLVH (205 aa).

This sequence belongs to the helicase family. SKI2 subfamily.

This chain is Probable helicase HelY (helY), found in Mycobacterium leprae (strain TN).